Consider the following 476-residue polypeptide: MNFETVIGLEVHVELKTKSKIFSSSPTPFGAEANTQTSVIDLGYPGVLPVLNKEAVEFAMKAAMALNCEIATDTKFDRKNYFYPDNPKAYQISQFDKPIGENGWIEIEVGGKTKKIGITRLHLEEDAGKLTHTGDGYSLVDFNRQGTPLVEIVSEPDIRTPEEAYAYLEKLKSIIQYTGVSDCKMEEGSLRCDANISLRPIGQEKFGTKTELKNLNSFAFVQKGLEHEEKRQEQVLLSGGVIQQETRRYDEATKKTILMRVKEGSDDYRYFPEPDLVELYIDDEWKERVRATIPELPDERRKRYIEELGLPAYDAMVLTLTKEMADFFEETVNKGAEAKQASNWLMGEVSAYLNAEQKELEDVALTPEGLAGMIKLIEKGTISSKIAKKVFKELIEKGGDAEKIVKEKGLVQISDESVLLKLVTDALDSNPQSIEDFKNGKDRAIGFLVGQIMKASKGQANPPMVNKILLEEIKKR.

The protein belongs to the GatB/GatE family. GatB subfamily. As to quaternary structure, heterotrimer of A, B and C subunits.

The catalysed reaction is L-glutamyl-tRNA(Gln) + L-glutamine + ATP + H2O = L-glutaminyl-tRNA(Gln) + L-glutamate + ADP + phosphate + H(+). It catalyses the reaction L-aspartyl-tRNA(Asn) + L-glutamine + ATP + H2O = L-asparaginyl-tRNA(Asn) + L-glutamate + ADP + phosphate + 2 H(+). In terms of biological role, allows the formation of correctly charged Asn-tRNA(Asn) or Gln-tRNA(Gln) through the transamidation of misacylated Asp-tRNA(Asn) or Glu-tRNA(Gln) in organisms which lack either or both of asparaginyl-tRNA or glutaminyl-tRNA synthetases. The reaction takes place in the presence of glutamine and ATP through an activated phospho-Asp-tRNA(Asn) or phospho-Glu-tRNA(Gln). The chain is Aspartyl/glutamyl-tRNA(Asn/Gln) amidotransferase subunit B from Bacillus velezensis (strain DSM 23117 / BGSC 10A6 / LMG 26770 / FZB42) (Bacillus amyloliquefaciens subsp. plantarum).